The chain runs to 691 residues: Protein simr-1 (691 aa).

The region spanning 139-204 (EAEITPGTIY…TLFHLGKFTI (66 aa)) is the Tudor; degenerate domain. Disordered stretches follow at residues 547 to 573 (TGPC…DMSI) and 588 to 618 (DNLN…TTNS). Polar residues-rich tracts occupy residues 549-573 (PCGS…DMSI) and 588-598 (DNLNDTENWPN).

The protein localises to the cytoplasm. Its subcellular location is the perinuclear region. Acts downstream of piRNA production to promote mediator complex-dependent endogenous siRNA biogenesis from piRNA-target mRNAs in the RNA interference pathway in germ cells. Not required to identify target mRNA by the piRNA pathway. Plays a role in both spermatogenesis and oogenesis and in maintaining fertility over multiple generations, probably by directing mutator-dependent silencing to piRNA-targeted genes. The sequence is that of Protein simr-1 from Caenorhabditis elegans.